The chain runs to 257 residues: Glutamate racemase (257 aa).

Substrate contacts are provided by residues 12–13 and 44–45; these read DS and YG. The Proton donor/acceptor role is filled by C75. 76 to 77 is a substrate binding site; sequence NT. C186 serves as the catalytic Proton donor/acceptor. Substrate is bound at residue 187–188; that stretch reads TH.

Belongs to the aspartate/glutamate racemases family.

It catalyses the reaction L-glutamate = D-glutamate. Its pathway is cell wall biogenesis; peptidoglycan biosynthesis. In terms of biological role, provides the (R)-glutamate required for cell wall biosynthesis. This is Glutamate racemase from Clostridium kluyveri (strain NBRC 12016).